The following is a 107-amino-acid chain: Integration host factor subunit beta (107 aa).

The segment at 78-107 (PHFKPGKELRERVDGRAGEPLKADEPDDER) is disordered. Residues 82 to 101 (PGKELRERVDGRAGEPLKAD) show a composition bias toward basic and acidic residues.

It belongs to the bacterial histone-like protein family. In terms of assembly, heterodimer of an alpha and a beta chain.

Functionally, this protein is one of the two subunits of integration host factor, a specific DNA-binding protein that functions in genetic recombination as well as in transcriptional and translational control. This chain is Integration host factor subunit beta, found in Burkholderia multivorans (strain ATCC 17616 / 249).